Here is a 376-residue protein sequence, read N- to C-terminus: Cell adhesion molecule CEACAM18 (376 aa).

Residues 1–30 (MDFSRPSFSPWRWLTLVASLLTCGICQASG) form the signal peptide. Residues 31–330 (QIFISPDSLL…PLPTVNRELY (300 aa)) are Extracellular-facing. Asparagine 69, asparagine 95, and asparagine 110 each carry an N-linked (GlcNAc...) asparagine glycan. The 86-residue stretch at 229-314 (PDYVSLWTQP…TQLTFYRDVT (86 aa)) folds into the Ig-like C2-type domain. Cysteine 257 and cysteine 298 form a disulfide bridge. Residues 331 to 351 (IPGPLVIFLILLTSLGGAFVC) traverse the membrane as a helical segment. Residues 352 to 376 (RVLVYSLFQSCSRGKTCHKCPWQTN) are Cytoplasmic-facing.

It belongs to the immunoglobulin superfamily. CEA family. As to expression, mostly expressed in the small and large intestine and at lower levels also in other organs.

It localises to the membrane. This chain is Cell adhesion molecule CEACAM18, found in Mus musculus (Mouse).